The sequence spans 330 residues: MNFDQKGMKKRSITVAYFFENIGRNHDIKLRRLNRVDEQKRRISERELHRPGLALAGFTNLFTYKRVQILGNTETRFLNNHDEAERRKAFENLVRFKVPCIILTSTNKLQPELLEMATEAGVPVYATRHSSTKAMYLITDFLDDQFSLHQQYHGSMVDVCGVGVLLTGKSGLGKSEIALDLIERGHGLVADDVVIIRRKGESLVLNARRNDIIDHFMEIRGLGVVDVKANFGIRAIRDIKDVQVVVELLEWNRETDYERLGLDMKSIKILGVEVPLVQLPIFPGKNIAVIIEVVALNFLLKHYSNYVAAEALTERIRTSIDKGNEQDDES.

Catalysis depends on residues histidine 153 and lysine 174. ATP is bound at residue 168-175 (GKSGLGKS). Serine 175 provides a ligand contact to Mg(2+). The active-site Proton acceptor; for phosphorylation activity. Proton donor; for dephosphorylation activity is the aspartate 192. The segment at 217 to 226 (MEIRGLGVVD) is important for the catalytic mechanism of both phosphorylation and dephosphorylation. Glutamate 218 lines the Mg(2+) pocket. Residue arginine 259 is part of the active site. Residues 280-285 (PIFPGK) form an important for the catalytic mechanism of dephosphorylation region.

Belongs to the HPrK/P family. Homohexamer. It depends on Mg(2+) as a cofactor.

It carries out the reaction [HPr protein]-L-serine + ATP = [HPr protein]-O-phospho-L-serine + ADP + H(+). The enzyme catalyses [HPr protein]-O-phospho-L-serine + phosphate + H(+) = [HPr protein]-L-serine + diphosphate. In terms of biological role, catalyzes the ATP- as well as the pyrophosphate-dependent phosphorylation of a specific serine residue in HPr, a phosphocarrier protein of the phosphoenolpyruvate-dependent sugar phosphotransferase system (PTS). HprK/P also catalyzes the pyrophosphate-producing, inorganic phosphate-dependent dephosphorylation (phosphorolysis) of seryl-phosphorylated HPr (P-Ser-HPr). In Chlorobium limicola (strain DSM 245 / NBRC 103803 / 6330), this protein is HPr kinase/phosphorylase.